We begin with the raw amino-acid sequence, 139 residues long: NADH dehydrogenase [ubiquinone] 1 alpha subcomplex subunit MCI4 (139 aa).

The protein belongs to the complex I NDUFA5 subunit family.

Its subcellular location is the mitochondrion inner membrane. In terms of biological role, accessory subunit of the mitochondrial membrane respiratory chain NADH dehydrogenase (Complex I), that is believed not to be involved in catalysis. Complex I functions in the transfer of electrons from NADH to the respiratory chain. The immediate electron acceptor for the enzyme is believed to be ubiquinone. Involved in osmotic and oxidative resistance, yeast to hypha transition and the ability to damage and invade oral epithelial cells. In Candida albicans (strain SC5314 / ATCC MYA-2876) (Yeast), this protein is NADH dehydrogenase [ubiquinone] 1 alpha subcomplex subunit MCI4.